The following is a 312-amino-acid chain: Protein atonal (312 aa).

2 disordered regions span residues 136-174 (SNVG…TAAA) and 220-248 (NDGS…GKQI). The span at 162–174 (PSTTATSTPTAAA) shows a compositional bias: low complexity. In terms of domain architecture, bHLH spans 255 to 307 (KRRLAANARERRRMQNLNQAFDRLRQYLPCLGNDRQLSKHETLQMAQTYISAL).

As to quaternary structure, efficient DNA binding requires dimerization with another bHLH protein. Forms a heterodimer with Daughterless. As to expression, proneural clusters and sense organ precursors of the chordotonal organs, optic furrow of the eye-antennal disk and developing brain lobe.

It is found in the nucleus. Its function is as follows. Developmental protein involved in neurogenesis. Required for the formation of chordotonal organs and photoreceptors. Seems to bind to E boxes. Specifically required for the photoreceptor R8 selection. The sequence is that of Protein atonal (ato) from Drosophila melanogaster (Fruit fly).